The following is a 750-amino-acid chain: Iron-sulfur clusters transporter ATM1, mitochondrial (750 aa).

The N-terminal 16 residues, 1 to 16 (MFIRNVKLIKPSPVRF), are a transit peptide targeting the mitochondrion. Over 17-124 (ISPIPFSFPI…PKNNLNFKIR (108 aa)) the chain is Mitochondrial matrix. 2 stretches are compositionally biased toward low complexity: residues 43 to 75 (TSNFKSTSSSSSLKSTSTSTSTSTSKTTPKTLS) and 87 to 100 (DNDTTSSGSSSSEN). The interval 43 to 100 (TSNFKSTSSSSSLKSTSTSTSTSTSKTTPKTLSKPPPKVKPPIQDNDTTSSGSSSSEN) is disordered. A helical membrane pass occupies residues 125 to 146 (VIIALSLLVGAKILNVQVPFYF). Positions 125-415 (VIIALSLLVG…LGSVYRELKQ (291 aa)) constitute an ABC transmembrane type-1 domain. The Mitochondrial intermembrane portion of the chain corresponds to 147-169 (KQIIDTMNIDWTNEVGVFSTVIG). The chain crosses the membrane as a helical span at residues 170–193 (SLILAYGGARFGAVLFGELRNAIF). Residues 194-242 (ASVAQSAIRRVAYNTFVKLLNMDLQFHLSRQTGGLTRAIDRGTKGISYV) are Mitochondrial matrix-facing. Residues 243-266 (LSAMVFHIIPITLEISIVCGILTY) form a helical membrane-spanning segment. A topological domain (mitochondrial intermembrane) is located at residue asparagine 267. The chain crosses the membrane as a helical span at residues 268 to 288 (YGASFAAMTFVTMLAYSIFTI). Topologically, residues 289-354 (QTTAWRTKFR…SSVKIATSLA (66 aa)) are mitochondrial matrix. Residues 294–298 (RTKFR) and 357–360 (NSGQ) each bind glutathione. The helical transmembrane segment at 355 to 373 (FLNSGQNFIFTSALTAMMY) threads the bilayer. The Mitochondrial intermembrane portion of the chain corresponds to 374 to 388 (MGCQGVYTGELTVGD). The helical transmembrane segment at 389–410 (LVLINQLVFQLSVPLNFLGSVY) threads the bilayer. Glycine 407 is a glutathione binding site. Residues 411–750 (RELKQSLLDM…LFNSQTFEKK (340 aa)) lie on the Mitochondrial matrix side of the membrane. The tract at residues 437-462 (PNAPPLKLNNNNNNNNNNNNNNNNSL) is disordered. Residues 445 to 460 (NNNNNNNNNNNNNNNN) are compositionally biased toward low complexity. One can recognise an ABC transporter domain in the interval 466 to 702 (IRFENVSFGY…QPNSLYAQLW (237 aa)). ATP is bound by residues tyrosine 475 and 499 to 510 (GPSGSGKSTILR).

Belongs to the ABC transporter superfamily. ABCB family. Heavy Metal importer (TC 3.A.1.210) subfamily. As to quaternary structure, homodimer.

The protein resides in the mitochondrion inner membrane. Performs an essential function in the generation of cytoplasmic iron-sulfur proteins by mediating the ATP-dependent export of Fe/S cluster precursors synthesized by NFS1 and other mitochondrial proteins. Hydrolyzes ATP. Binds glutathione and may function by transporting a glutathione-conjugated iron-sulfur compound. This Candida albicans (strain SC5314 / ATCC MYA-2876) (Yeast) protein is Iron-sulfur clusters transporter ATM1, mitochondrial.